The primary structure comprises 152 residues: 3-hydroxyacyl-[acyl-carrier-protein] dehydratase FabZ (152 aa).

The active site involves H54.

The protein belongs to the thioester dehydratase family. FabZ subfamily.

The protein resides in the cytoplasm. It carries out the reaction a (3R)-hydroxyacyl-[ACP] = a (2E)-enoyl-[ACP] + H2O. Functionally, involved in unsaturated fatty acids biosynthesis. Catalyzes the dehydration of short chain beta-hydroxyacyl-ACPs and long chain saturated and unsaturated beta-hydroxyacyl-ACPs. The chain is 3-hydroxyacyl-[acyl-carrier-protein] dehydratase FabZ from Roseobacter denitrificans (strain ATCC 33942 / OCh 114) (Erythrobacter sp. (strain OCh 114)).